The sequence spans 367 residues: tRNA-specific 2-thiouridylase MnmA (367 aa).

Residues 6-13 (AMSGGVDS) and M32 each bind ATP. The active-site Nucleophile is C101. C101 and C193 form a disulfide bridge. Position 125 (G125) interacts with ATP. The interval 143–145 (KDQ) is interaction with tRNA. The Cysteine persulfide intermediate role is filled by C193.

It belongs to the MnmA/TRMU family.

The protein resides in the cytoplasm. It carries out the reaction S-sulfanyl-L-cysteinyl-[protein] + uridine(34) in tRNA + AH2 + ATP = 2-thiouridine(34) in tRNA + L-cysteinyl-[protein] + A + AMP + diphosphate + H(+). In terms of biological role, catalyzes the 2-thiolation of uridine at the wobble position (U34) of tRNA, leading to the formation of s(2)U34. The sequence is that of tRNA-specific 2-thiouridylase MnmA from Mycobacterium tuberculosis (strain CDC 1551 / Oshkosh).